Reading from the N-terminus, the 389-residue chain is Growth/differentiation factor 2 (389 aa).

The signal sequence occupies residues 1–20; it reads MWRVGHLLLLMSIVFRITEE. Positions 21-280 are excised as a propeptide; that stretch reads KSLGDAGSLE…PVSNRHRRRK (260 aa). 4 N-linked (GlcNAc...) asparagine glycosylation sites follow: asparagine 65, asparagine 118, asparagine 127, and asparagine 232. Residues 263 to 272 show a composition bias toward polar residues; the sequence is QQQVGNQAPV. The interval 263 to 284 is disordered; it reads QQQVGNQAPVSNRHRRRKRKAK. The segment covering 274 to 284 has biased composition (basic residues); that stretch reads NRHRRRKRKAK. 3 cysteine pairs are disulfide-bonded: cysteine 288/cysteine 354, cysteine 317/cysteine 386, and cysteine 321/cysteine 388. An N-linked (GlcNAc...) asparagine glycan is attached at asparagine 342.

It belongs to the TGF-beta family. Homodimer; disulfide-linked. A reversible disulfide bond can be formed between the two subunits in the homodimer; this has no effect on gdf2 activity.

It localises to the secreted. Functionally, potent circulating inhibitor of angiogenesis. Signals through the type I activin receptor ACVRL1 but not other Alks. Signaling through SMAD1 in endothelial cells requires TGF-beta coreceptor endoglin/eng. This Danio rerio (Zebrafish) protein is Growth/differentiation factor 2 (gdf2).